Consider the following 740-residue polypeptide: Folic acid synthesis protein fol1 (740 aa).

2 DHNA regions span residues 39 to 160 (DLIH…REID) and 161 to 280 (DQFF…SCFS). The HPPK stretch occupies residues 291–449 (IDNEAVYISL…EKIVDHDIKP (159 aa)). The region spanning 471–730 (TYIMAILNLT…DVYEMYKISK (260 aa)) is the Pterin-binding domain. The DHPS stretch occupies residues 473 to 740 (IMAILNLTPD…MSDAIWKEIY (268 aa)). N478 lines the Mg(2+) pocket. Residues T517, D552, N571, D643, K683, and 718 to 720 (RVH) contribute to the (7,8-dihydropterin-6-yl)methyl diphosphate site.

It in the N-terminal section; belongs to the DHNA family. This sequence in the central section; belongs to the HPPK family. In the C-terminal section; belongs to the DHPS family. Mg(2+) serves as cofactor.

The enzyme catalyses 7,8-dihydroneopterin = 6-hydroxymethyl-7,8-dihydropterin + glycolaldehyde. It catalyses the reaction 6-hydroxymethyl-7,8-dihydropterin + ATP = (7,8-dihydropterin-6-yl)methyl diphosphate + AMP + H(+). The catalysed reaction is (7,8-dihydropterin-6-yl)methyl diphosphate + 4-aminobenzoate = 7,8-dihydropteroate + diphosphate. It functions in the pathway cofactor biosynthesis; tetrahydrofolate biosynthesis; 2-amino-4-hydroxy-6-hydroxymethyl-7,8-dihydropteridine diphosphate from 7,8-dihydroneopterin triphosphate: step 3/4. Its pathway is cofactor biosynthesis; tetrahydrofolate biosynthesis; 2-amino-4-hydroxy-6-hydroxymethyl-7,8-dihydropteridine diphosphate from 7,8-dihydroneopterin triphosphate: step 4/4. It participates in cofactor biosynthesis; tetrahydrofolate biosynthesis; 7,8-dihydrofolate from 2-amino-4-hydroxy-6-hydroxymethyl-7,8-dihydropteridine diphosphate and 4-aminobenzoate: step 1/2. Catalyzes three sequential steps of tetrahydrofolate biosynthesis. This is Folic acid synthesis protein fol1 (fol1) from Pneumocystis carinii.